The sequence spans 1335 residues: DNA polymerase III subunit alpha (1335 aa).

Residues 442-461 (QDSDTSIELDPDTDDEETTR) are disordered. A compositionally biased stretch (acidic residues) spans 446–458 (TSIELDPDTDDEE).

This sequence belongs to the DNA polymerase type-C family. DnaE subfamily. As to quaternary structure, DNA polymerase III contains a core (composed of alpha, epsilon and theta chains) that associates with a tau subunit. This core dimerizes to form the PolIII' complex. PolIII' associates with the gamma complex (composed of gamma, delta, delta', psi and chi chains) and with the beta chain to form the complete DNA polymerase III complex.

Its subcellular location is the cytoplasm. It catalyses the reaction DNA(n) + a 2'-deoxyribonucleoside 5'-triphosphate = DNA(n+1) + diphosphate. Functionally, DNA polymerase III is a complex, multichain enzyme responsible for most of the replicative DNA synthesis in bacteria as well as the bulk of DNA synthesis/repair after ionizing radiation (IR). The alpha chain is the catalytic subunit. Following severe irradiation (7 kGy of gamma irradiation) genomic DNA is fragmented. DNA is progressively degraded for the first 1.5 hours after IR, in a step promoted by RecA and counterbalanced by DNA Pol I and Pol III, followed by massive DNA synthesis and genome reassembly in the next hour. Optimal priming of DNA synthesis requires both RecA and RadA, Pol III initiates DNA synthesis while both Pol I and Pol III are required for its continuation. This DNA polymerase also exhibits 3' to 5' exonuclease activity. In Deinococcus radiodurans (strain ATCC 13939 / DSM 20539 / JCM 16871 / CCUG 27074 / LMG 4051 / NBRC 15346 / NCIMB 9279 / VKM B-1422 / R1), this protein is DNA polymerase III subunit alpha (dnaE).